Consider the following 339-residue polypeptide: Agamous-like MADS-box protein AGL86 (339 aa).

Residues 1–60 (MRSKIKLSLIANKTSRRTTFRKRKGGITNKLHELTTLCGVKACAVISSPYENPVVWPSTE) form the MADS-box domain. Residues 86–112 (TYLQDKITKETKKLESLRRENRESQLR) are a coiled coil.

Interacts with AGL61/DIANA and AGL62.

It is found in the nucleus. Probable transcription factor. The polypeptide is Agamous-like MADS-box protein AGL86 (AGL86) (Arabidopsis thaliana (Mouse-ear cress)).